The primary structure comprises 278 residues: Ribosomal RNA small subunit methyltransferase A (278 aa).

Residues Asn27, Leu29, Gly54, Glu75, Asp95, and Asn118 each contribute to the S-adenosyl-L-methionine site.

It belongs to the class I-like SAM-binding methyltransferase superfamily. rRNA adenine N(6)-methyltransferase family. RsmA subfamily.

It is found in the cytoplasm. It catalyses the reaction adenosine(1518)/adenosine(1519) in 16S rRNA + 4 S-adenosyl-L-methionine = N(6)-dimethyladenosine(1518)/N(6)-dimethyladenosine(1519) in 16S rRNA + 4 S-adenosyl-L-homocysteine + 4 H(+). In terms of biological role, specifically dimethylates two adjacent adenosines (A1518 and A1519) in the loop of a conserved hairpin near the 3'-end of 16S rRNA in the 30S particle. May play a critical role in biogenesis of 30S subunits. The chain is Ribosomal RNA small subunit methyltransferase A from Chlamydia abortus (strain DSM 27085 / S26/3) (Chlamydophila abortus).